Reading from the N-terminus, the 122-residue chain is Secreted RxLR effector protein RXLR-C251 (122 aa).

An N-terminal signal peptide occupies residues 1–24 (MRFFYKLALMTTVASLACSDTALA). A RxLR motif is present at residues 48-51 (RSLR).

The protein belongs to the RxLR effector family.

It is found in the secreted. It localises to the host cytoplasm. The protein localises to the host nucleus. In terms of biological role, secreted effector that does not suppress pattern-triggered immunity (PTI) in plant host. The sequence is that of Secreted RxLR effector protein RXLR-C251 from Plasmopara halstedii (Downy mildew of sunflower).